The following is a 446-amino-acid chain: Glutamyl-tRNA(Gln) amidotransferase subunit D (446 aa).

The region spanning 90–421 (SEVMIISTGG…DRIKEIMLTN (332 aa)) is the Asparaginase/glutaminase domain. Active-site residues include Thr-100, Thr-176, Asp-177, and Lys-255.

This sequence belongs to the asparaginase 1 family. GatD subfamily. As to quaternary structure, heterodimer of GatD and GatE.

The catalysed reaction is L-glutamyl-tRNA(Gln) + L-glutamine + ATP + H2O = L-glutaminyl-tRNA(Gln) + L-glutamate + ADP + phosphate + H(+). Functionally, allows the formation of correctly charged Gln-tRNA(Gln) through the transamidation of misacylated Glu-tRNA(Gln) in organisms which lack glutaminyl-tRNA synthetase. The reaction takes place in the presence of glutamine and ATP through an activated gamma-phospho-Glu-tRNA(Gln). The GatDE system is specific for glutamate and does not act on aspartate. The protein is Glutamyl-tRNA(Gln) amidotransferase subunit D of Sulfolobus acidocaldarius (strain ATCC 33909 / DSM 639 / JCM 8929 / NBRC 15157 / NCIMB 11770).